A 306-amino-acid chain; its full sequence is uncharacterized protein (306 aa).

Helical transmembrane passes span 6–26 (LLGF…PIAL), 35–55 (AQTI…ALLA), 69–89 (YAWI…LFSS), 98–118 (VAQI…VLIF), 122–142 (LGLH…LFFN), 154–174 (YSTG…YGMA), 186–206 (QILL…ADFS), 211–231 (LTPL…IGYG), 247–267 (VVIT…HYFS), and 281–301 (YIGA…HKLL). EamA domains are found at residues 17–142 (MAWG…LFFN) and 166–296 (LIWV…LSAI).

Belongs to the EamA transporter family.

Its subcellular location is the cell membrane. This is an uncharacterized protein from Haemophilus influenzae (strain ATCC 51907 / DSM 11121 / KW20 / Rd).